A 116-amino-acid chain; its full sequence is Aspartate 1-decarboxylase (116 aa).

Catalysis depends on serine 25, which acts as the Schiff-base intermediate with substrate; via pyruvic acid. A Pyruvic acid (Ser) modification is found at serine 25. Threonine 57 provides a ligand contact to substrate. The active-site Proton donor is the tyrosine 58. Position 73 to 75 (glycine 73 to alanine 75) interacts with substrate.

It belongs to the PanD family. Heterooctamer of four alpha and four beta subunits. Pyruvate serves as cofactor. In terms of processing, is synthesized initially as an inactive proenzyme, which is activated by self-cleavage at a specific serine bond to produce a beta-subunit with a hydroxyl group at its C-terminus and an alpha-subunit with a pyruvoyl group at its N-terminus.

Its subcellular location is the cytoplasm. It catalyses the reaction L-aspartate + H(+) = beta-alanine + CO2. It participates in cofactor biosynthesis; (R)-pantothenate biosynthesis; beta-alanine from L-aspartate: step 1/1. Its function is as follows. Catalyzes the pyruvoyl-dependent decarboxylation of aspartate to produce beta-alanine. In Leptospira interrogans serogroup Icterohaemorrhagiae serovar copenhageni (strain Fiocruz L1-130), this protein is Aspartate 1-decarboxylase.